Reading from the N-terminus, the 438-residue chain is MFTPLSSVTALLALSSAFLGAQAGCKPKNYGPEKPHGGNGGNRGSGNGNSTSKFIAKGYYTGWNSDDFKPEQVSWSKYTQLAYAFGIPTDSANFNLSLDASNAESLDPFVTAAHEHGVQVTLSVGGWTGSLHLSYAVANAQNRTTFVKTLVDFVVKHKLDGLDVDWQSPNKLGLPCNAINANDTANLLLFLQELRKDPVGAKMILSATGNIVPWTDANGNPSADVSAFGKVLDHVTPLLYDVWGSWSDSVGPNSPLNDTCAAPDKQQGSVVSAVAKWNKAGIPLEKIVLGVGAYGHAFSVNKTKAYVNGTKELAAYPPFNKDIHPKGDKWDDPAGVDPCGVATPDGGIFTFWGLIEHGYLNEDGSPKRPYRFDNCSRTAYAYNEEEQVMVSFDDAQAFKEKGAFIKSQGLGGFSVWNAGSDHKDILLDAIRSGAGLSK.

The first 23 residues, 1 to 23 (MFTPLSSVTALLALSSAFLGAQA), serve as a signal peptide directing secretion. The GH18 domain maps to 54–437 (FIAKGYYTGW…DAIRSGAGLS (384 aa)). W416 is a chitin binding site.

This sequence belongs to the glycosyl hydrolase 18 family.

The protein localises to the secreted. In terms of biological role, catalytically impaired chitinase that binds efficiently to chitin, but not to chitosan, xylan, or cellulose. Despite the lack of chitinolytic activity, retains substrate binding specificity and acts as an effector to prevent chitin-triggered immunity by sequestering immunogenic chitin fragments. Does not function in the protection of fungal cell wall against plant hydrolytic enzymes. The protein is chitinase-like effector of Moniliophthora perniciosa (Witches'-broom disease fungus).